Here is a 908-residue protein sequence, read N- to C-terminus: Translation initiation factor IF-2 (908 aa).

Residues 52-318 (QSHGQEEKRR…RSSQSSQHKF (267 aa)) form a disordered region. Positions 65–84 (KSKTTSTARVTGSSGKSKSV) are enriched in polar residues. Basic and acidic residues-rich tracts occupy residues 94-108 (FEKP…ELAA), 120-138 (AAKD…EERQ), 176-185 (IEVKPKDQPK), 193-238 (PKVE…EQMR), 270-280 (SFEKERREIKR), and 294-303 (KNQDEREIKN). Positions 409-578 (TRPPVVTIMG…SLQAELMELE (170 aa)) constitute a tr-type G domain. Residues 418 to 425 (GHVDHGKT) are G1. 418 to 425 (GHVDHGKT) lines the GTP pocket. Positions 443 to 447 (GITQH) are G2. The interval 464 to 467 (DTPG) is G3. GTP-binding positions include 464 to 468 (DTPGH) and 518 to 521 (NKMD). Positions 518–521 (NKMD) are G4. The tract at residues 554-556 (SAK) is G5.

The protein belongs to the TRAFAC class translation factor GTPase superfamily. Classic translation factor GTPase family. IF-2 subfamily.

The protein resides in the cytoplasm. In terms of biological role, one of the essential components for the initiation of protein synthesis. Protects formylmethionyl-tRNA from spontaneous hydrolysis and promotes its binding to the 30S ribosomal subunits. Also involved in the hydrolysis of GTP during the formation of the 70S ribosomal complex. The polypeptide is Translation initiation factor IF-2 (Psychrobacter cryohalolentis (strain ATCC BAA-1226 / DSM 17306 / VKM B-2378 / K5)).